The primary structure comprises 386 residues: Succinate--CoA ligase [ADP-forming] subunit beta (386 aa).

One can recognise an ATP-grasp domain in the interval 9–244; it reads KEILRKYGVS…LDEEDPKEIE (236 aa). Residues Lys46, 53-55, Glu99, Cys102, and Glu107 contribute to the ATP site; that span reads GRG. The Mg(2+) site is built by Asn199 and Asp213. Substrate is bound by residues Asn264 and 321–323; that span reads GIM.

This sequence belongs to the succinate/malate CoA ligase beta subunit family. As to quaternary structure, heterotetramer of two alpha and two beta subunits. The cofactor is Mg(2+).

It carries out the reaction succinate + ATP + CoA = succinyl-CoA + ADP + phosphate. The catalysed reaction is GTP + succinate + CoA = succinyl-CoA + GDP + phosphate. The protein operates within carbohydrate metabolism; tricarboxylic acid cycle; succinate from succinyl-CoA (ligase route): step 1/1. In terms of biological role, succinyl-CoA synthetase functions in the citric acid cycle (TCA), coupling the hydrolysis of succinyl-CoA to the synthesis of either ATP or GTP and thus represents the only step of substrate-level phosphorylation in the TCA. The beta subunit provides nucleotide specificity of the enzyme and binds the substrate succinate, while the binding sites for coenzyme A and phosphate are found in the alpha subunit. In Bacillus pumilus (strain SAFR-032), this protein is Succinate--CoA ligase [ADP-forming] subunit beta.